The chain runs to 44 residues: Antimicrobial peptide 1b (44 aa).

The region spanning 1-42 (AQKCGEQGRGAKCPNCLCCGRYGFCGSTPDYCGVGCQSQCRG) is the Chitin-binding type-1 domain. Intrachain disulfides connect Cys4/Cys19, Cys13/Cys25, Cys16/Cys43, Cys18/Cys32, and Cys36/Cys40.

Contains 5 disulfide bonds.

Functionally, binds chitin. Has antifungal activity against F.oxysporum 16/10 (IC(50)=4.1 uM) and B.sorokiniana 6/10 (IC(50)=2.7 uM). Inhibits germination of fungal spores. The sequence is that of Antimicrobial peptide 1b from Leymus arenarius (Lyme grass).